Here is a 394-residue protein sequence, read N- to C-terminus: MNKYKRIFLVVMDSVGIGEAPDAEQFGDLGSDTIGHIAEHMNGLHMPNMVKLGLGNIREMKGISKVEKPLGYYTKMQEKSTGKDTMTGHWEIMGLYIDTPFQVFPEGFPKELLDELEEKTGRKIIGNKPASGTEILDELGQEQMETGSLIVYTSADSVLQIAAHEEVVPLDELYKICKIARELTLDEKYMVGRVIARPFVGEPGNFTRTPNRHDYALKPFGRTVMNELKDSDYDVIAIGKISDIYDGEGVTESLRTKSNMDGMDKLVDTLNMDFTGLSFLNLVDFDALFGHRRDPQGYGEALQEYDARLPEVFEKLKEDDLLLITADHGNDPVHHGTDHTREYVPLLAYSPSMKEGGQELPLRQTFADIGATVAENFGVKMPEYGTSFLNELKK.

Mn(2+) contacts are provided by aspartate 13, aspartate 286, histidine 291, aspartate 327, histidine 328, and histidine 339.

Belongs to the phosphopentomutase family. Mn(2+) is required as a cofactor.

Its subcellular location is the cytoplasm. The catalysed reaction is 2-deoxy-alpha-D-ribose 1-phosphate = 2-deoxy-D-ribose 5-phosphate. It catalyses the reaction alpha-D-ribose 1-phosphate = D-ribose 5-phosphate. It participates in carbohydrate degradation; 2-deoxy-D-ribose 1-phosphate degradation; D-glyceraldehyde 3-phosphate and acetaldehyde from 2-deoxy-alpha-D-ribose 1-phosphate: step 1/2. Functionally, isomerase that catalyzes the conversion of deoxy-ribose 1-phosphate (dRib-1-P) and ribose 1-phosphate (Rib-1-P) to deoxy-ribose 5-phosphate (dRib-5-P) and ribose 5-phosphate (Rib-5-P), respectively. The polypeptide is Phosphopentomutase (Bacillus thuringiensis (strain Al Hakam)).